We begin with the raw amino-acid sequence, 156 residues long: Small ribosomal subunit protein uS7 (156 aa).

It belongs to the universal ribosomal protein uS7 family. As to quaternary structure, part of the 30S ribosomal subunit. Contacts proteins S9 and S11.

One of the primary rRNA binding proteins, it binds directly to 16S rRNA where it nucleates assembly of the head domain of the 30S subunit. Is located at the subunit interface close to the decoding center, probably blocks exit of the E-site tRNA. This is Small ribosomal subunit protein uS7 from Chromobacterium violaceum (strain ATCC 12472 / DSM 30191 / JCM 1249 / CCUG 213 / NBRC 12614 / NCIMB 9131 / NCTC 9757 / MK).